The sequence spans 244 residues: MAETIKVRALPQAHCKDCSLAPLCLPLSLTVEDMDSLDEIVKRGRPLKKGEFLFRQGDPFGSVFAVRSGALKTFSITDAGEEQITGFHLPSELVGLSGMDTETYPVSAQALETTSVCEIPFERLDELSEQLPQLRRQLMRLMSREIRDDQQMMLLLSKKTADERIATFLVNLSARFRARGFSAQQFRLAMSRNEIGNYLGLAVETVSRVFTRFQQNGLISAEGKEVHILDSIELCALAGGQLEG.

A nucleoside 3',5'-cyclic phosphate is bound at residue 21-149; the sequence is APLCLPLSLT…RLMSREIRDD (129 aa). Positions 159-232 constitute an HTH crp-type domain; the sequence is KTADERIATF…GKEVHILDSI (74 aa). The segment at residues 192–211 is a DNA-binding region (H-T-H motif); it reads RNEIGNYLGLAVETVSRVFT.

Its function is as follows. Transcriptional activator of anaerobic gene expression. The chain is Transcriptional activator protein anr (anr) from Pseudomonas aeruginosa (strain ATCC 15692 / DSM 22644 / CIP 104116 / JCM 14847 / LMG 12228 / 1C / PRS 101 / PAO1).